We begin with the raw amino-acid sequence, 344 residues long: Lipase chaperone (344 aa).

Residues 14–34 (VAVYGAVGLAAIAGVAIWSGA) form a helical membrane-spanning segment. Residues 45–57 (LSADAAARDGASA) are compositionally biased toward low complexity. Residues 45-78 (LSADAAARDGASAAPPPPARPASAGMPSPLAGSS) form a disordered region.

The protein belongs to the lipase chaperone family.

It is found in the cell inner membrane. Its function is as follows. May be involved in the folding of the extracellular lipase during its passage through the periplasm. The sequence is that of Lipase chaperone from Burkholderia ambifaria (strain ATCC BAA-244 / DSM 16087 / CCUG 44356 / LMG 19182 / AMMD) (Burkholderia cepacia (strain AMMD)).